Consider the following 116-residue polypeptide: Large ribosomal subunit protein bL20 (116 aa).

Belongs to the bacterial ribosomal protein bL20 family.

Its function is as follows. Binds directly to 23S ribosomal RNA and is necessary for the in vitro assembly process of the 50S ribosomal subunit. It is not involved in the protein synthesizing functions of that subunit. In Desulforapulum autotrophicum (strain ATCC 43914 / DSM 3382 / VKM B-1955 / HRM2) (Desulfobacterium autotrophicum), this protein is Large ribosomal subunit protein bL20.